The primary structure comprises 208 residues: MWIPIIIPFGLRGKSKLIDNKKRICVNCKNSGVQLVKNDEWFHLFFIPFFKVKNGNMFLHCPSCGATIPYYEKETMPTFNNPDDVKFEAENNEKNHKKGKYDAPMAQVPPEYLQRQDQYPNQYQQQPQQQQPGYMDYNYNQPPVQLNKQAYDNYQQNDYKSNNQPNLAKENNISNENEELGDNKKEKKEKKHSFFSKLHKKEKNEIKE.

The segment covering 118-134 (QYPNQYQQQPQQQQPGY) has biased composition (low complexity). The tract at residues 118–208 (QYPNQYQQQP…HKKEKNEIKE (91 aa)) is disordered. The segment covering 138 to 175 (NYNQPPVQLNKQAYDNYQQNDYKSNNQPNLAKENNISN) has biased composition (polar residues). The span at 187-201 (KKEKKHSFFSKLHKK) shows a compositional bias: basic residues.

This is an uncharacterized protein from Dictyostelium discoideum (Social amoeba).